The primary structure comprises 372 residues: N-acetylneuraminate epimerase 1 (372 aa).

The N-terminal stretch at 1 to 25 is a signal peptide; the sequence is MITMKVKNFIYLPFCLFIGTSVAGA. Kelch repeat units follow at residues 44–88, 90–141, 143–177, 178–223, 226–269, 291–340, and 342–371; these read KIYI…TIID, KIYV…FIHN, HAVSTGGVNENIFNGYFSDVELSKGNSALTEKVNR, DYFS…IFAE, IYIL…VSGA, EKYS…PWQG, and MLILGGEKKDGKAVSDVIYLKKNDKQIKIV. Residue glutamate 232 is the Proton acceptor of the active site.

This sequence belongs to the NanM family. In terms of assembly, homodimer.

It is found in the periplasm. It catalyses the reaction N-acetyl-alpha-neuraminate = N-acetyl-beta-neuraminate. In terms of biological role, converts alpha-N-acetylneuranimic acid (Neu5Ac) to the beta-anomer, accelerating the equilibrium between the alpha- and beta-anomers. Probably facilitates sialidase-negative bacteria to compete successfully for limited amounts of extracellular Neu5Ac, which is likely taken up in the beta-anomer. In addition, the rapid removal of sialic acid from solution might be advantageous to the bacterium to damp down host responses. The chain is N-acetylneuraminate epimerase 1 from Escherichia coli O6:H1 (strain CFT073 / ATCC 700928 / UPEC).